The following is a 770-amino-acid chain: 3-isopropylmalate dehydratase (770 aa).

[4Fe-4S] cluster contacts are provided by Cys-354, Cys-415, and Cys-418.

The protein belongs to the aconitase/IPM isomerase family. Monomer. [4Fe-4S] cluster is required as a cofactor.

It catalyses the reaction (2R,3S)-3-isopropylmalate = (2S)-2-isopropylmalate. It participates in amino-acid biosynthesis; L-leucine biosynthesis; L-leucine from 3-methyl-2-oxobutanoate: step 2/4. Its function is as follows. Catalyzes the isomerization between 2-isopropylmalate and 3-isopropylmalate, via the formation of 2-isopropylmaleate. The sequence is that of 3-isopropylmalate dehydratase (LEU1) from Candida maltosa (Yeast).